The sequence spans 60 residues: Large ribosomal subunit protein bL32 (60 aa).

The segment at 1 to 60 (MAVQQNKKSPSKRGMHRSHNALTVPGIAVEPTTGETHLRHHISPNGFYRGRQVLKNKSEA) is disordered. Basic residues predominate over residues 9–19 (SPSKRGMHRSH).

Belongs to the bacterial ribosomal protein bL32 family.

The chain is Large ribosomal subunit protein bL32 from Paracidovorax citrulli (strain AAC00-1) (Acidovorax citrulli).